A 399-amino-acid chain; its full sequence is Beta-1,6-galactosyltransferase GALT31A (399 aa).

At 1 to 12 (MGMGRYQKSATS) the chain is on the cytoplasmic side. A helical; Signal-anchor for type II membrane protein membrane pass occupies residues 13 to 35 (GVSARWVFVLCISSFLLGVLVVN). The Lumenal portion of the chain corresponds to 36 to 399 (RLLASFETVD…GDGAIWHSSF (364 aa)).

Belongs to the glycosyltransferase 31 family. Interacts with GALT29A. The cofactor is Mn(2+).

It is found in the golgi apparatus membrane. The protein operates within protein modification; protein glycosylation. Its function is as follows. Beta-galactosyltransferase involved in elongation of beta-1,6-linked galactan side chains on arabinogalactan proteins. Required for the progression of embryogenesis beyond the globular stage. Beta-galactosyltransferase involved in the biosynthesis of type II arabinogalactan. Transfers galactose from UDP-galactose to a mixture of various oligosaccharides derived from arabinogalactan proteins. Forms a complex with GALT29A that can work cooperatively to enhance the activities of adding galactose residues at O6 positions to beta-1,6-linked galactan and beta-1,3-linked galactan. In Arabidopsis thaliana (Mouse-ear cress), this protein is Beta-1,6-galactosyltransferase GALT31A.